A 539-amino-acid chain; its full sequence is Phosphoenolpyruvate carboxykinase (ATP) (539 aa).

The substrate site is built by R64, Y206, and K212. ATP is bound by residues K212, H231, and 247 to 255; that span reads GLSGTGKTT. The Mn(2+) site is built by K212 and H231. D268 is a Mn(2+) binding site. Residues E296, R332, 448–449, and T454 contribute to the ATP site; that span reads RI. R332 is a substrate binding site.

It belongs to the phosphoenolpyruvate carboxykinase (ATP) family. Monomer. The cofactor is Mn(2+).

It localises to the cytoplasm. The catalysed reaction is oxaloacetate + ATP = phosphoenolpyruvate + ADP + CO2. It participates in carbohydrate biosynthesis; gluconeogenesis. Involved in the gluconeogenesis. Catalyzes the conversion of oxaloacetate (OAA) to phosphoenolpyruvate (PEP) through direct phosphoryl transfer between the nucleoside triphosphate and OAA. The sequence is that of Phosphoenolpyruvate carboxykinase (ATP) from Sodalis glossinidius (strain morsitans).